Reading from the N-terminus, the 232-residue chain is Orotate phosphoribosyltransferase (232 aa).

5-phospho-alpha-D-ribose 1-diphosphate-binding positions include R107, K108, K111, H113, and 133 to 141 (EDLTTAGGS). T137 contacts orotate.

It belongs to the purine/pyrimidine phosphoribosyltransferase family. PyrE subfamily. As to quaternary structure, homodimer. Requires Mg(2+) as cofactor.

It catalyses the reaction orotidine 5'-phosphate + diphosphate = orotate + 5-phospho-alpha-D-ribose 1-diphosphate. The protein operates within pyrimidine metabolism; UMP biosynthesis via de novo pathway; UMP from orotate: step 1/2. Catalyzes the transfer of a ribosyl phosphate group from 5-phosphoribose 1-diphosphate to orotate, leading to the formation of orotidine monophosphate (OMP). The protein is Orotate phosphoribosyltransferase of Agrobacterium fabrum (strain C58 / ATCC 33970) (Agrobacterium tumefaciens (strain C58)).